The primary structure comprises 557 residues: MAYSEEHKGMPCGFIRQNSGNSISLDFEPSIEYQFVERLEERYKCAFCHSVLHNPHQTGCGHRFCQHCILSLRELNTVPICPVDKEVIKSQEVFKDNCCKREVLNLYVYCSNAPGCNAKVILGRYQDHLQQCLFQPVQCSNEKCREPVLRKDLKEHLSASCQFRKEKCLYCKKDVVVINLQNHEENLCPEYPVFCPNNCAKIILKTEVDEHLAVCPEAEQDCPFKHYGCAVTDKRRNLQQHEHSALREHMRLVLEKNVQLEEQISDLHKSLEQKESKIQQLAETIKKLEKEFKQFAQLFGKNGSFLPNIQVFASHIDKSAWLEAQVHQLLQMVNQQQNKFDLRPLMEAVDTVKQKITLLENNDQRLAVLEEETNKHDTHINIHKAQLSKNEERFKLLEGTCYNGKLIWKVTDYKMKKREAVDGHTVSIFSQSFYTSRCGYRLCARAYLNGDGSGRGSHLSLYFVVMRGEFDSLLQWPFRQRVTLMLLDQSGKKNIMETFKPDPNSSSFKRPDGEMNIASGCPRFVAHSVLENAKNAYIKDDTLFLKVAVDLTDLEDL.

The RING-type zinc-finger motif lies at 45 to 85 (CAFCHSVLHNPHQTGCGHRFCQHCILSLRELNTVPICPVDK). 2 consecutive TRAF-type zinc fingers follow at residues 127-181 (DHLQ…INLQ) and 182-239 (NHEE…RNLQ). A coiled-coil region spans residues 237–342 (NLQQHEHSAL…VNQQQNKFDL (106 aa)). A Glycyl lysine isopeptide (Lys-Gly) (interchain with G-Cter in ubiquitin) cross-link involves residue lysine 318. The interaction with EIF2AK2/PKR stretch occupies residues 345-557 (LMEAVDTVKQ…AVDLTDLEDL (213 aa)). Residues 403 to 549 (NGKLIWKVTD…DDTLFLKVAV (147 aa)) enclose the MATH domain.

It belongs to the TNF receptor-associated factor family. A subfamily. As to quaternary structure, homotrimer. Heteromer with TRAF3. Associates with TNFRSF5/CD40 through interaction with TRAF3. Associates with LTBR/TNFRSF3, TNFRSF4, TNFRSF8/CD30, TNFRSF11A/RANK, TNFRSF13B/TACI, TNFRSF14, TNFRSF17, TNFRSF19/TROY, RIPK2, MAP3K14, MAP3K5, and TRAF and TNF receptor associated protein TDP2. Interacts (via C-terminus) with EIF2AK2/PKR (via the kinase catalytic domain). Ubiquitinated at Lys-318 by the SCF(FBXL2) complex, leading to its degradation by the proteasome. Expressed in spleen, thymus, prostate, testis, ovary, small intestine, colon, and peripheral blood.

It is found in the cytoplasm. The protein resides in the cytosol. Adapter protein and signal transducer that links members of the tumor necrosis factor receptor family to different signaling pathways by association with the receptor cytoplasmic domain and kinases. Mediates activation of NF-kappa-B and probably JNK. Seems to be involved in apoptosis. Plays a role in mediating activation of NF-kappa-B by EIF2AK2/PKR. This chain is TNF receptor-associated factor 5 (TRAF5), found in Homo sapiens (Human).